A 98-amino-acid chain; its full sequence is Acylphosphatase (98 aa).

The Acylphosphatase-like domain occupies 12–98 (TYYVRVRGVV…ERRFDRFQQQ (87 aa)). Active-site residues include Arg27 and Asn45.

This sequence belongs to the acylphosphatase family.

The enzyme catalyses an acyl phosphate + H2O = a carboxylate + phosphate + H(+). This is Acylphosphatase (acyP) from Burkholderia ambifaria (strain ATCC BAA-244 / DSM 16087 / CCUG 44356 / LMG 19182 / AMMD) (Burkholderia cepacia (strain AMMD)).